Reading from the N-terminus, the 370-residue chain is Ganglioside-induced differentiation-associated protein 1-like 1 (370 aa).

The GST N-terminal domain maps to Glu-45–His-129. One can recognise a GST C-terminal domain in the interval Pro-177 to Phe-344.

The protein belongs to the GST superfamily.

This chain is Ganglioside-induced differentiation-associated protein 1-like 1 (Gdap1l1), found in Mus musculus (Mouse).